A 300-amino-acid polypeptide reads, in one-letter code: Glycine--tRNA ligase alpha subunit (300 aa).

This sequence belongs to the class-II aminoacyl-tRNA synthetase family. As to quaternary structure, tetramer of two alpha and two beta subunits.

It localises to the cytoplasm. The catalysed reaction is tRNA(Gly) + glycine + ATP = glycyl-tRNA(Gly) + AMP + diphosphate. This chain is Glycine--tRNA ligase alpha subunit (glyQ), found in Buchnera aphidicola subsp. Baizongia pistaciae (strain Bp).